The sequence spans 260 residues: Ribosomal RNA small subunit methyltransferase J (260 aa).

S-adenosyl-L-methionine contacts are provided by residues 125–126 (ER) and D179.

This sequence belongs to the methyltransferase superfamily. RsmJ family.

It localises to the cytoplasm. It catalyses the reaction guanosine(1516) in 16S rRNA + S-adenosyl-L-methionine = N(2)-methylguanosine(1516) in 16S rRNA + S-adenosyl-L-homocysteine + H(+). Its function is as follows. Specifically methylates the guanosine in position 1516 of 16S rRNA. The sequence is that of Ribosomal RNA small subunit methyltransferase J from Pseudomonas fluorescens (strain Pf0-1).